The following is a 102-amino-acid chain: Small ribosomal subunit protein uS10 (102 aa).

The protein belongs to the universal ribosomal protein uS10 family. As to quaternary structure, part of the 30S ribosomal subunit.

Involved in the binding of tRNA to the ribosomes. This Methanosarcina mazei (strain ATCC BAA-159 / DSM 3647 / Goe1 / Go1 / JCM 11833 / OCM 88) (Methanosarcina frisia) protein is Small ribosomal subunit protein uS10.